Here is a 71-residue protein sequence, read N- to C-terminus: UPF0434 protein APH_0052 (71 aa).

A compositionally biased stretch (basic and acidic residues) spans 52–63; that stretch reads RKLQPEEPKEGS. The interval 52–71 is disordered; it reads RKLQPEEPKEGSELQSSDNQ.

The protein belongs to the UPF0434 family.

The chain is UPF0434 protein APH_0052 from Anaplasma phagocytophilum (strain HZ).